Consider the following 195-residue polypeptide: MAPKKKLQLPPPPPTDEEEYWDSQAEEVLDEEEEMMEDWDSLDEASEAEEVSDETPSPSVAFPSPAPQKLATVPSIATTSAPQAPPALPVRRPNRRWDTTGTRAGKSKQPPPLAQEQQQRQGYRSWRGHKNAIVACLQDCGGNISFARRFLLYHHGVAFPRNILHYYRHLYSPYCTGGSGSGSNSSGHTEAKATG.

Residues 1 to 124 (MAPKKKLQLP…QEQQQRQGYR (124 aa)) are disordered. Positions 15–53 (TDEEEYWDSQAEEVLDEEEEMMEDWDSLDEASEAEEVSD) are enriched in acidic residues. Residues 54-63 (ETPSPSVAFP) show a composition bias toward low complexity.

It belongs to the adenoviridae splicing factor family. As to quaternary structure, part of a genome packaging complex composed of packaging proteins 1, 2 and 3; this complex specifically binds to the packaging sequence on the left end of viral genomic DNA and performs packaging of the viral genome. Self-assembles into higher-order structures.

The protein localises to the host nucleus. Functionally, component of the packaging machinery which encapsidates the viral DNA into preformed capsids and transcriptional activator of the viral major late promoter (MLP). Binds, along with packaging proteins 1 and 3, to the specific packaging sequence on the left end of viral genomic DNA and plays an active role in packaging of the viral genome into preformed capsids. Specifically binds to the 5'-TTTG-3' nucleotides of the repeats making up the packaging sequence. Forms a transcription factor called DEF-A through cooperative binding with packaging protein 1. DEF-A binds to downstream elements of the major late promoter (MLP) and stimulates transcription from the MLP after initiation of viral DNA replication. Simultaneously suppresses early gene expression and is thus likely to participate in the early-late switch in the expression pattern of the late viral proteins. May as well enhance transcription from IVa2 and pIX promoters. The protein is Packaging protein 2 of Homo sapiens (Human).